Reading from the N-terminus, the 300-residue chain is 2-methylisocitrate lyase (300 aa).

53–55 provides a ligand contact to substrate; sequence SGD. Mg(2+)-binding residues include D92 and D94. Residues 129 to 130, R162, E192, 214 to 216, R245, and R274 contribute to the substrate site; these read CG and NMT.

This sequence belongs to the isocitrate lyase/PEP mutase superfamily. Methylisocitrate lyase family. Mg(2+) serves as cofactor.

It carries out the reaction 3-hydroxybutane-1,2,3-tricarboxylate = pyruvate + succinate. In terms of biological role, involved in the methylcitric acid cycle. Catalyzes the cleavage of 2-methylisocitrate to yield pyruvate and succinate. This Halalkalibacterium halodurans (strain ATCC BAA-125 / DSM 18197 / FERM 7344 / JCM 9153 / C-125) (Bacillus halodurans) protein is 2-methylisocitrate lyase.